The chain runs to 121 residues: Basic phospholipase A2 CoaTx-II (121 aa).

Cystine bridges form between Cys26–Cys115, Cys28–Cys44, Cys43–Cys95, Cys49–Cys121, Cys50–Cys88, Cys57–Cys81, and Cys75–Cys86. Residues 105–117 form an important for membrane-damaging activities in eukaryotes and bacteria; heparin-binding region; sequence KKYRIYPKFLCKK.

It belongs to the phospholipase A2 family. Group II subfamily. K49 sub-subfamily. In terms of assembly, homodimer; non-covalently-linked. Expressed by the venom gland.

The protein resides in the secreted. Functionally, snake venom phospholipase A2 (PLA2) that lacks enzymatic inactivity. It shows antibacterial activity against both Gram-negative and Gram-positive bacteria, including methicillin-resistant strains. In vivo, it causes local muscular damage, but no systemic damage (intravenous administration does not elevate plasma creatine kinase). Also causes an inflammatory activity that is demonstrated by mice paw edema induction and pro-inflammatory cytokine IL-6 elevation. A model of myotoxic mechanism has been proposed: an apo Lys49-PLA2 is activated by the entrance of a hydrophobic molecule (e.g. fatty acid) at the hydrophobic channel of the protein leading to a reorientation of a monomer. This reorientation causes a transition between 'inactive' to 'active' states, causing alignment of C-terminal and membrane-docking sites (MDoS) side-by-side and putting the membrane-disruption sites (MDiS) in the same plane, exposed to solvent and in a symmetric position for both monomers. The MDoS region stabilizes the toxin on membrane by the interaction of charged residues with phospholipid head groups. Subsequently, the MDiS region destabilizes the membrane with penetration of hydrophobic residues. This insertion causes a disorganization of the membrane, allowing an uncontrolled influx of ions (i.e. calcium and sodium), and eventually triggering irreversible intracellular alterations and cell death. The protein is Basic phospholipase A2 CoaTx-II of Crotalus lutosus abyssus (Grand Canyon rattlesnake).